Here is a 71-residue protein sequence, read N- to C-terminus: Small ribosomal subunit protein bS21 (71 aa).

The protein belongs to the bacterial ribosomal protein bS21 family.

This Vesicomyosocius okutanii subsp. Calyptogena okutanii (strain HA) protein is Small ribosomal subunit protein bS21.